The chain runs to 159 residues: Ribosome maturation factor RimP (159 aa).

Belongs to the RimP family.

It is found in the cytoplasm. Functionally, required for maturation of 30S ribosomal subunits. The protein is Ribosome maturation factor RimP of Streptococcus pneumoniae serotype 19F (strain G54).